We begin with the raw amino-acid sequence, 84 residues long: Exendin-2-long (84 aa).

Residues M1–Q23 form the signal peptide. Residues M24–S44 constitute a propeptide that is removed on maturation.

Belongs to the glucagon family. In terms of processing, an amidated Pro-81 is described. Such an amidation is however not compatible with the sequence displayed. Indeed cDNAs do not encode a Gly that could serve as substrate for peptide alpha-amidation. As to expression, expressed by the venom gland. Not expressed in the pancreas, liver, stomach, small intestine, lung, heart, kidney, spleen, ovary, and brain.

Its subcellular location is the secreted. Its function is as follows. Has vasoactive intestinal peptide(VIP)/secretin-like biological activity. Interacts with rat and human VIP receptors 1 (VIPR1) and 2 (VIPR2), with the highest affinity for the human VIPR2. Induces hypotension that is mediated by relaxation of cardiac smooth muscle. This vasodilation may not be transduced by VIP or PACAP receptors. The sequence is that of Exendin-2-long from Heloderma suspectum (Gila monster).